We begin with the raw amino-acid sequence, 370 residues long: GDSL esterase/lipase At1g09390 (370 aa).

A signal peptide spans 1–27; the sequence is MATLSLHSHSFLLVLLPFILILRQNLA. S44 serves as the catalytic Nucleophile. N-linked (GlcNAc...) asparagine glycans are attached at residues N90 and N315. Active-site residues include D336 and H339.

The protein belongs to the 'GDSL' lipolytic enzyme family.

The protein localises to the secreted. The chain is GDSL esterase/lipase At1g09390 from Arabidopsis thaliana (Mouse-ear cress).